The chain runs to 91 residues: MKTLLLTLVVMTIVCLDLGYSLICFISPHDSVTCAPGENVCFLKSWCDAWCGSRGKKLSFGCAATCPKVNPGIDIECCSTDNCNPHPKLRP.

The N-terminal stretch at 1 to 21 is a signal peptide; that stretch reads MKTLLLTLVVMTIVCLDLGYS. Cystine bridges form between Cys24–Cys41, Cys34–Cys62, Cys47–Cys51, Cys66–Cys77, and Cys78–Cys83.

Belongs to the three-finger toxin family. Long-chain subfamily. Type II alpha-neurotoxin sub-subfamily. In terms of tissue distribution, expressed by the venom gland.

It is found in the secreted. Its function is as follows. Binds with high affinity to muscular (alpha-1/CHRNA1) and neuronal (alpha-7/CHRNA7) nicotinic acetylcholine receptor (nAChR) and inhibits acetylcholine from binding to the receptor, thereby impairing neuromuscular and neuronal transmission. In Ophiophagus hannah (King cobra), this protein is Long neurotoxin OH-37.